A 75-amino-acid chain; its full sequence is Pi-hexatoxin-Hi1a (75 aa).

6 disulfide bridges follow: Cys-3–Cys-18, Cys-10–Cys-23, Cys-17–Cys-33, Cys-40–Cys-55, Cys-47–Cys-60, and Cys-54–Cys-71. 2 Domain repeats span residues 3 to 33 (CIRK…FEVC) and 40 to 71 (CLVK…SSVC). The segment at 3–71 (CIRKWLSCVD…KRSGNKSSVC (69 aa)) is 2 X approximate repeats with cysteine pattern C-C-CC-C-C.

It belongs to the psalmotoxin-1 family. Double-knot toxin subfamily. Expressed by the venom gland.

The protein resides in the secreted. Its function is as follows. This toxin potently and selectively inhibits ASIC1a (IC(50)=0.4 nM on rASIC1a and IC(50)=0.52 nM on hASIC1a), an isoform of the gene ASIC1. It incompletely inhibits ASIC1a activation in a pH-independent and slowly reversible manner (Tau(off)=14.2 minutes for rASIC1a and 31.8 minutes for hASIC1a). This toxin acts by binding to and stabilizing the closed state of the channel, thereby impeding the transition into a conducting state. This toxin may bind to the acidic pocket of ASIC1a, since mutation of a key residue of this pocket (Arg-350) abolishes the ability of the toxin to inhibit ASIC1a. In addition, it shows antiparasitic activities, since it moderately inhibits the larval development of the major pathogenic nematode of ruminants (H.contortus, IC(50)=22.9 uM). In vivo, this toxin protects the brain from neuronal injury when administered up to 8 hours after stroke onset. This is Pi-hexatoxin-Hi1a from Hadronyche infensa (Fraser island funnel-web spider).